We begin with the raw amino-acid sequence, 224 residues long: Peroxynitrite isomerase 2 (224 aa).

The short motif at 71 to 77 is the GXWXGXG element; that stretch reads GVWRGEG. The heme b site is built by lysine 187 and histidine 214.

The protein belongs to the nitrobindin family. In terms of assembly, homodimer. Heme b serves as cofactor.

It carries out the reaction peroxynitrite = nitrate. The protein operates within nitrogen metabolism. Heme-binding protein able to scavenge peroxynitrite and to protect free L-tyrosine against peroxynitrite-mediated nitration, by acting as a peroxynitrite isomerase that converts peroxynitrite to nitrate. Therefore, this protein likely plays a role in peroxynitrite sensing and in the detoxification of reactive nitrogen and oxygen species (RNS and ROS, respectively). Is able to bind nitric oxide (NO) in vitro, but may act as a sensor of peroxynitrite levels in vivo. The protein is Peroxynitrite isomerase 2 of Mycobacterium sp. (strain JLS).